Here is a 92-residue protein sequence, read N- to C-terminus: Probable K(+)/H(+) antiporter subunit F (92 aa).

Transmembrane regions (helical) follow at residues A4–L24, R36–I56, and V62–A82.

It belongs to the CPA3 antiporters (TC 2.A.63) subunit F family. In terms of assembly, may form a hetero-oligomeric complex that consists of six subunits: PhaAB, PhaC, PhaD, PhaE, PhaF and PhaG.

It localises to the cell membrane. In terms of biological role, part of a K(+) efflux system which is required for the adaptation of R.meliloti to alkaline pH as well as for the infection process during symbiotic nodule development. This chain is Probable K(+)/H(+) antiporter subunit F (phaF), found in Rhizobium meliloti (strain 1021) (Ensifer meliloti).